The following is a 902-amino-acid chain: Nuclear factor of activated T-cells, cytoplasmic 4 (902 aa).

Disordered regions lie at residues 16-180 (VFGE…SSWS) and 208-369 (RFGL…GGSR). Residues 50 to 81 (EPPPYGAAPIGIPRPPPPRPGMHSPPPRPAPS) are compositionally biased toward pro residues. Positions 96-109 (GGPGGGAGGAGGGR) are enriched in gly residues. The tract at residues 114 to 119 (PSIRIT) is calcineurin-binding. Over residues 151–165 (GFGGYREAGGQGGGA) the composition is skewed to gly residues. A compositionally biased stretch (low complexity) spans 166 to 180 (FFSPSPGSSSLSSWS). Residues Ser-168 and Ser-170 each carry the phosphoserine; by MAPK7 and MAPK14 modification. 2 positions are modified to phosphoserine; by MAPK8 and MAPK9: Ser-213 and Ser-217. An SP 1 repeat occupies 213-229 (SPLPSPRASPRPWTPED). The interval 213–293 (SPLPSPRASP…LSRRGSLGEE (81 aa)) is 2 approximate SP repeats. Composition is skewed to pro residues over residues 215-227 (LPSPRASPRPWTP) and 254-263 (GPTPASPRPA). Residues 268-270 (KRR) carry the Nuclear localization signal motif. Over residues 272 to 288 (SSSGTPSSASPALSRRG) the composition is skewed to low complexity. One copy of the SP 2; approximate repeat lies at 277–293 (PSSASPALSRRGSLGEE). Phosphoserine; by RPS6KA3 occurs at positions 289 and 344. The RHD domain maps to 401 to 582 (SALPPLDWPL…VPIECSQRSA (182 aa)). A DNA-binding region spans residues 430-437 (RAHYETEG). Residues 586–683 (PQVEAYSPSA…KRSPTQSFRF (98 aa)) form the IPT/TIG domain. A Nuclear localization signal motif is present at residues 672-674 (RRK). Residue Lys-689 forms a Glycyl lysine isopeptide (Lys-Gly) (interchain with G-Cter in SUMO2) linkage. The disordered stretch occupies residues 791–870 (PYGGRGSSFS…GGYSSGFRDS (80 aa)). A compositionally biased stretch (pro residues) spans 805-824 (FSPPAPFRPPPLPASPPLEG).

Member of the multicomponent NFATC transcription complex that consists of at least two components, a pre-existing cytoplasmic component NFATC2 and an inducible nuclear component NFATC1. Other NFAT proteins, such as NFATC3, or members of the activating protein-1 (AP-1) family and MAF can also bind the complex. NFAT proteins can bind DNA as monomers or dimers. Component of a promoter-binding complex composed of STAT3, NFATC3 and NFATC4; complex formation is enhanced by calcineurin. Interacts with CREBBP; this interaction potentiates transcription activation. Interacts with MAPK8/JNK1 and MAPK9/JNK2. Interacts with GATA4 (via the second Zn finger). Interacts (via N-terminus) with IRAK1 (via C-terminus). Interacts with RPS6KA3. Interacts with HOMER1, HOMER2 and HOMER3; this interaction competes with calcineurin/PPP3CA-binding and hence prevents NFATC4 dephosphorylation and activation. Interacts with ESR1 and ESR2; this interaction decreases NFATC4 transcriptional activity. Interacts with MTOR and MAPK7/ERK5. Interacts with TRIM17; this interaction prevents NFATC3 nuclear localization. Interacts with TCF25 (via C-terminus); the interaction leads to suppression of NFATC4 transcription factor activity and is reduced following stimulation with angiotensin-2. In terms of processing, phosphorylated by NFATC-kinases; dephosphorylated by calcineurin/PPP3CA. Phosphorylated on Ser-168 and Ser-170 by MTOR, IRAK1, MAPK7/ERK5 and MAPK14/p38, on Ser-213 and Ser-217 by MAPK8/JNK1 and MAPK9/JNK2, and on Ser-289 and Ser-344 by RPS6KA3. Phosphorylated by GSK3B. Phosphorylation by GSK3B markedly increases NFATC4 ubiquitination. Phosphorylation at Ser-168 and Ser-170 is stimulated by UV irradiation. Phosphorylation determines subcellular location: the hyperphosphorylated protein is cytosolic, while the dephosphorylated form is targeted to the nucleus. Ubiquitinated, leading to degradation by the proteasome. Ubiquitination may be stimulated by GSK3B-dependent phosphorylation. Polyubiquitin linkage mainly occurs through 'Lys-48'. Widely expressed, with high levels in placenta, lung, kidney, testis and ovary. Weakly expressed in spleen and thymus. In the hippocampus, expressed in the granular layer of the dentate gyrus, in the pyramidal neurons of CA3 region, and in the hippocampal fissure. Expressed in the heart (at protein level).

The protein localises to the cytoplasm. The protein resides in the nucleus. Its activity is regulated as follows. Transcriptional activity may be repressed by ESR1 and ESR2. Functionally, ca(2+)-regulated transcription factor that is involved in several processes, including the development and function of the immune, cardiovascular, musculoskeletal, and nervous systems. Involved in T-cell activation, stimulating the transcription of cytokine genes, including that of IL2 and IL4. Along with NFATC3, involved in embryonic heart development. Following JAK/STAT signaling activation and as part of a complex with NFATC3 and STAT3, binds to the alpha-beta E4 promoter region of CRYAB and activates transcription in cardiomyocytes. Involved in mitochondrial energy metabolism required for cardiac morphogenesis and function. Transactivates many genes involved in the cardiovascular system, including AGTR2, NPPB/BNP (in synergy with GATA4), NPPA/ANP/ANF and MYH7/beta-MHC. Involved in the regulation of adult hippocampal neurogenesis. Involved in BDNF-driven pro-survival signaling in hippocampal adult-born neurons. Involved in the formation of long-term spatial memory and long-term potentiation. In cochlear nucleus neurons, may play a role in deafferentation-induced apoptosis during the developmental critical period, when auditory neurons depend on afferent input for survival. Binds to and activates the BACE1/Beta-secretase 1 promoter, hence may regulate the proteolytic processing of the amyloid precursor protein (APP). Plays a role in adipocyte differentiation. May be involved in myoblast differentiation into myotubes. Binds the consensus DNA sequence 5'-GGAAAAT-3'. In the presence of CREBBP, activates TNF transcription. Binds to PPARG gene promoter and regulates its activity. Binds to PPARG and REG3G gene promoters. This Homo sapiens (Human) protein is Nuclear factor of activated T-cells, cytoplasmic 4 (NFATC4).